The chain runs to 767 residues: Pre-mRNA-splicing factor ATP-dependent RNA helicase PRP43 (767 aa).

A disordered region spans residues 1–74 (MGSKRRFSSE…KLEDGKINPF (74 aa)). Phosphoserine occurs at positions 8 and 9. The span at 58–70 (TSAEEAQKLEDGK) shows a compositional bias: basic and acidic residues. Positions 103 to 268 (LKLYQNNQIM…FNDAPLLAVP (166 aa)) constitute a Helicase ATP-binding domain. 116–123 (GETGSGKT) contacts ATP. The short motif at 215 to 218 (DEAH) is the DEAH box element. Residues 293-473 (TVLQIHATEE…STVLELKKLG (181 aa)) enclose the Helicase C-terminal domain.

The protein belongs to the DEAD box helicase family. DEAH subfamily. DDX15/PRP43 sub-subfamily. As to quaternary structure, component of the NTR complex (NTC-related complex), composed of NTR1, NTR2 and PRP43. Interacts with NTR1 and NTR2. Interacts with SPP382.

It localises to the nucleus. It catalyses the reaction ATP + H2O = ADP + phosphate + H(+). In terms of biological role, pre-mRNA processing factor involved in disassembly of spliceosomes after the release of mature mRNA. The polypeptide is Pre-mRNA-splicing factor ATP-dependent RNA helicase PRP43 (PRP43) (Saccharomyces cerevisiae (strain ATCC 204508 / S288c) (Baker's yeast)).